The chain runs to 203 residues: ATP-dependent Clp protease proteolytic subunit 1 (203 aa).

S102 functions as the Nucleophile in the catalytic mechanism. Residue H127 is part of the active site.

This sequence belongs to the peptidase S14 family. As to quaternary structure, fourteen ClpP subunits assemble into 2 heptameric rings which stack back to back to give a disk-like structure with a central cavity, resembling the structure of eukaryotic proteasomes.

The protein localises to the cytoplasm. The catalysed reaction is Hydrolysis of proteins to small peptides in the presence of ATP and magnesium. alpha-casein is the usual test substrate. In the absence of ATP, only oligopeptides shorter than five residues are hydrolyzed (such as succinyl-Leu-Tyr-|-NHMec, and Leu-Tyr-Leu-|-Tyr-Trp, in which cleavage of the -Tyr-|-Leu- and -Tyr-|-Trp bonds also occurs).. Cleaves peptides in various proteins in a process that requires ATP hydrolysis. Has a chymotrypsin-like activity. Plays a major role in the degradation of misfolded proteins. The sequence is that of ATP-dependent Clp protease proteolytic subunit 1 from Rhizobium johnstonii (strain DSM 114642 / LMG 32736 / 3841) (Rhizobium leguminosarum bv. viciae).